The chain runs to 314 residues: 4-hydroxy-3-methylbut-2-enyl diphosphate reductase (314 aa).

[4Fe-4S] cluster is bound at residue Cys-12. 2 residues coordinate (2E)-4-hydroxy-3-methylbut-2-enyl diphosphate: His-41 and His-74. Dimethylallyl diphosphate-binding residues include His-41 and His-74. 2 residues coordinate isopentenyl diphosphate: His-41 and His-74. Cys-96 is a [4Fe-4S] cluster binding site. A (2E)-4-hydroxy-3-methylbut-2-enyl diphosphate-binding site is contributed by His-124. His-124 provides a ligand contact to dimethylallyl diphosphate. His-124 contacts isopentenyl diphosphate. Catalysis depends on Glu-126, which acts as the Proton donor. Thr-167 lines the (2E)-4-hydroxy-3-methylbut-2-enyl diphosphate pocket. Position 197 (Cys-197) interacts with [4Fe-4S] cluster. Positions 225, 226, 227, and 269 each coordinate (2E)-4-hydroxy-3-methylbut-2-enyl diphosphate. 4 residues coordinate dimethylallyl diphosphate: Ser-225, Ser-226, Asn-227, and Ser-269. Positions 225, 226, 227, and 269 each coordinate isopentenyl diphosphate.

This sequence belongs to the IspH family. It depends on [4Fe-4S] cluster as a cofactor.

It catalyses the reaction isopentenyl diphosphate + 2 oxidized [2Fe-2S]-[ferredoxin] + H2O = (2E)-4-hydroxy-3-methylbut-2-enyl diphosphate + 2 reduced [2Fe-2S]-[ferredoxin] + 2 H(+). The enzyme catalyses dimethylallyl diphosphate + 2 oxidized [2Fe-2S]-[ferredoxin] + H2O = (2E)-4-hydroxy-3-methylbut-2-enyl diphosphate + 2 reduced [2Fe-2S]-[ferredoxin] + 2 H(+). The protein operates within isoprenoid biosynthesis; dimethylallyl diphosphate biosynthesis; dimethylallyl diphosphate from (2E)-4-hydroxy-3-methylbutenyl diphosphate: step 1/1. It functions in the pathway isoprenoid biosynthesis; isopentenyl diphosphate biosynthesis via DXP pathway; isopentenyl diphosphate from 1-deoxy-D-xylulose 5-phosphate: step 6/6. In terms of biological role, catalyzes the conversion of 1-hydroxy-2-methyl-2-(E)-butenyl 4-diphosphate (HMBPP) into a mixture of isopentenyl diphosphate (IPP) and dimethylallyl diphosphate (DMAPP). Acts in the terminal step of the DOXP/MEP pathway for isoprenoid precursor biosynthesis. The sequence is that of 4-hydroxy-3-methylbut-2-enyl diphosphate reductase from Psychromonas ingrahamii (strain DSM 17664 / CCUG 51855 / 37).